The chain runs to 226 residues: Lipoprotein-releasing system ATP-binding protein LolD (226 aa).

Residues 5 to 225 (LELVEIERHF…TLKEKKIVEL (221 aa)) enclose the ABC transporter domain. 41-48 (APSGAGKS) is a binding site for ATP.

The protein belongs to the ABC transporter superfamily. Lipoprotein translocase (TC 3.A.1.125) family. The complex is composed of two ATP-binding proteins (LolD) and two transmembrane proteins (LolC and LolE).

Its subcellular location is the cell inner membrane. Its function is as follows. Part of the ABC transporter complex LolCDE involved in the translocation of mature outer membrane-directed lipoproteins, from the inner membrane to the periplasmic chaperone, LolA. Responsible for the formation of the LolA-lipoprotein complex in an ATP-dependent manner. This chain is Lipoprotein-releasing system ATP-binding protein LolD, found in Bartonella quintana (strain Toulouse) (Rochalimaea quintana).